The chain runs to 250 residues: Hemocyanin, units C and D (250 aa).

A Cu cation-binding site is contributed by His1. Residues 1-106 form a unit C region; the sequence is HGSTKWCPSP…RAWIEPVTSA (106 aa). An intrachain disulfide couples Cys7 to Cys18. Residues 19–21 constitute a cross-link (2'-(S-cysteinyl)-histidine (Cys-His)); that stretch reads CHH. Cu cation contacts are provided by His21 and His143. Residues 107-250 form a unit D region; that stretch reads VRIRKNLNDL…DAQDVIYNNH (144 aa). Cysteines 149 and 160 form a disulfide. The segment at residues 161-163 is a cross-link (2'-(S-cysteinyl)-histidine (Cys-His)); that stretch reads CLH. His172 contacts Cu cation.

It belongs to the tyrosinase family. Hemocyanin subfamily. As to quaternary structure, decamers of large identical subunits (390 kDa), each containing 8 globular oxygen-binding functional units. Requires Cu(2+) as cofactor.

Functionally, hemocyanins are copper-containing oxygen carriers occurring freely dissolved in the hemolymph of many mollusks and arthropods. This Sepia officinalis (Common cuttlefish) protein is Hemocyanin, units C and D.